A 436-amino-acid chain; its full sequence is Flagellum-specific ATP synthase (436 aa).

An ATP-binding site is contributed by 165–172 (SGSGVGKS).

This sequence belongs to the ATPase alpha/beta chains family.

Its subcellular location is the cytoplasm. It carries out the reaction ATP + H2O + 4 H(+)(in) = ADP + phosphate + 5 H(+)(out). In terms of biological role, probable catalytic subunit of a protein translocase for flagellum-specific export, or a proton translocase involved in local circuits at the flagellum. May be involved in a specialized protein export pathway that proceeds without signal peptide cleavage. The sequence is that of Flagellum-specific ATP synthase (fliI) from Borreliella burgdorferi (strain ATCC 35210 / DSM 4680 / CIP 102532 / B31) (Borrelia burgdorferi).